Here is a 335-residue protein sequence, read N- to C-terminus: MYSLIRKALFSMEAETAHYFSIQALKLMGKLPFSLCSTTLNPVEVMGLKFKNPIGLAAGADKNGEAIDGFAKLGFGFIEVGTVTPLAQDGNNKPRQFRILEAEGIINRNGFNNQGVDVLVENVKKASYDGILGINIGKNATTPIENALDDYQICLHKVYSYADYITVNISSPNTHNLRALQYGEALDHLLAELKTEQAKLAKKFNQYKPLVLKIAPDLTNEEIVSIADSLIRHQMDGVIAGNTTLSRENIAGFNHAHQQGGLSGKPLHTLSTKLISTLAKELKGKIPIIGSGGVHSIDSGQQKIDAGAHLLQLYSAMIYQGPTLIQELAKKIILR.

FMN-binding positions include 58–62 (AGADK) and T82. Position 62 (K62) interacts with substrate. Residue 107–111 (NRNGF) participates in substrate binding. FMN is bound by residues N135 and N168. N168 contacts substrate. The active-site Nucleophile is the S171. N173 contributes to the substrate binding site. 2 residues coordinate FMN: K213 and G241. 242-243 (NT) provides a ligand contact to substrate. Residues G264, G293, and 314-315 (YS) contribute to the FMN site.

It belongs to the dihydroorotate dehydrogenase family. Type 2 subfamily. In terms of assembly, monomer. The cofactor is FMN.

The protein localises to the cell membrane. The catalysed reaction is (S)-dihydroorotate + a quinone = orotate + a quinol. Its pathway is pyrimidine metabolism; UMP biosynthesis via de novo pathway; orotate from (S)-dihydroorotate (quinone route): step 1/1. Functionally, catalyzes the conversion of dihydroorotate to orotate with quinone as electron acceptor. The polypeptide is Dihydroorotate dehydrogenase (quinone) (Haemophilus ducreyi (strain 35000HP / ATCC 700724)).